The chain runs to 139 residues: MWNPSAGPNPYPPQVVCPGGSNPACPPSQNPAFPPGPCPPGIPQGNPAFPPCRPPYPVPQPGCPGYQPSGPYPPPYPPAAPGMCPVNPPAPGMVGPGIVIDKKTRKKMKKAHKKSHKHHKHGKHSSSSSSSSSSSSDSD.

A disordered region spans residues 1-139 (MWNPSAGPNP…SSSSSSSDSD (139 aa)). 2 stretches are compositionally biased toward pro residues: residues 24-62 (ACPPSQNPAFPPGPCPPGIPQGNPAFPPCRPPYPVPQPG) and 70-91 (GPYPPPYPPAAPGMCPVNPPAP). The segment covering 103–124 (KTRKKMKKAHKKSHKHHKHGKH) has biased composition (basic residues). The span at 125 to 139 (SSSSSSSSSSSSDSD) shows a compositional bias: low complexity.

It localises to the nucleus. Its function is as follows. Negatively regulates TSP1 expression at the level of transcription. This down-regulation was shown to reduce taxane-induced apoptosis. This Rattus norvegicus (Rat) protein is Proline-rich protein 13 (Prr13).